The primary structure comprises 400 residues: Tektin-B1 (400 aa).

Coiled coils occupy residues 35-81, 236-294, and 310-353; these read TRLS…AKAL, FALR…LENR, and GLVN…LELK.

Belongs to the tektin family. As to quaternary structure, may form a heterodimer with tektin a or exist as a homodimer. In terms of tissue distribution, cilia and flagella.

It is found in the cytoplasm. Its subcellular location is the cytoskeleton. Structural component of ciliary and flagellar microtubules. This is Tektin-B1 from Strongylocentrotus purpuratus (Purple sea urchin).